A 231-amino-acid polypeptide reads, in one-letter code: Isoprenyl transferase (231 aa).

Asp14 is a catalytic residue. Asp14 contacts Mg(2+). Residues Gly15–Arg18, Trp19, Arg27, His31, and Ser59–Glu61 each bind substrate. The active-site Proton acceptor is Asn62. Residues Trp63, Arg65, Arg176, and Arg182–Ser184 each bind substrate. Residue Glu195 coordinates Mg(2+).

The protein belongs to the UPP synthase family. In terms of assembly, homodimer. The cofactor is Mg(2+).

Catalyzes the condensation of isopentenyl diphosphate (IPP) with allylic pyrophosphates generating different type of terpenoids. This Aquifex aeolicus (strain VF5) protein is Isoprenyl transferase.